The primary structure comprises 197 residues: Probable chorismate pyruvate-lyase 2 (197 aa).

Residues M1–P14 show a composition bias toward basic and acidic residues. Positions M1 to K23 are disordered. Residues R73, L111, and E173 each coordinate substrate.

This sequence belongs to the UbiC family.

The protein localises to the cytoplasm. It catalyses the reaction chorismate = 4-hydroxybenzoate + pyruvate. It functions in the pathway cofactor biosynthesis; ubiquinone biosynthesis. Removes the pyruvyl group from chorismate, with concomitant aromatization of the ring, to provide 4-hydroxybenzoate (4HB) for the ubiquinone pathway. The protein is Probable chorismate pyruvate-lyase 2 of Burkholderia pseudomallei (strain 1710b).